A 384-amino-acid chain; its full sequence is Outer membrane protein assembly factor BamB (384 aa).

The N-terminal stretch at Met-1–Ala-21 is a signal peptide. Cys-22 carries the N-palmitoyl cysteine lipid modification. A lipid anchor (S-diacylglycerol cysteine) is attached at Cys-22.

It belongs to the BamB family. As to quaternary structure, part of the Bam complex.

It is found in the cell outer membrane. Functionally, part of the outer membrane protein assembly complex, which is involved in assembly and insertion of beta-barrel proteins into the outer membrane. The chain is Outer membrane protein assembly factor BamB from Taylorella asinigenitalis (strain MCE3).